The following is a 99-amino-acid chain: Sm-like protein LSM7 (99 aa).

The region spanning 6–86 (ETVLDLAKFV…VMLVSPTDGT (81 aa)) is the Sm domain.

It belongs to the snRNP Sm proteins family. As to quaternary structure, component of the heptameric LSM1-LSM7 complex that forms a seven-membered ring structure with a donut shape. The LSM subunits are arranged in the order LSM1, LSM2, LSM3, LSM6, LSM5, LSM7 and LSM4. Component of the heptameric LSM2-LSM8 complex that forms a seven-membered ring structure with a donut shape. The LSM subunits are arranged in the order LSM8, LSM2, LSM3, LSM6, LSM5, LSM7 and LSM4. LSM7 subunit interacts only with its two neighboring subunits, LSM5 and LSM4. Expressed in roots, leaves, stems, flowers and siliques.

Its subcellular location is the cytoplasm. The protein localises to the nucleus. Component of LSM protein complexes, which are involved in RNA processing. Component of the cytoplasmic LSM1-LSM7 complex which is involved in mRNA degradation by promoting decapping and leading to accurate 5'-3' mRNA decay. The cytoplasmic LSM1-LSM7 complex regulates developmental gene expression by the decapping of specific development-related transcripts. Component of the nuclear LSM2-LSM8 complex which is involved splicing nuclear mRNAs. LSM2-LSM8 binds directly to the U6 small nuclear RNAs (snRNAs) and is essential for accurate splicing of selected development-related mRNAs through the stabilization of the spliceosomal U6 snRNA. Plays a critical role in the regulation of development-related gene expression. This is Sm-like protein LSM7 from Arabidopsis thaliana (Mouse-ear cress).